The sequence spans 464 residues: Glucan 1,3-beta-glucosidase 3 (464 aa).

Belongs to the glycosyl hydrolase 5 (cellulase A) family.

It carries out the reaction Successive hydrolysis of beta-D-glucose units from the non-reducing ends of (1-&gt;3)-beta-D-glucans, releasing alpha-glucose.. The polypeptide is Glucan 1,3-beta-glucosidase 3 (exg3) (Schizosaccharomyces pombe (strain 972 / ATCC 24843) (Fission yeast)).